A 600-amino-acid chain; its full sequence is MAGEGQRAEPEREGWALYVTPRAPLREGRPRLAPQNGGSGDVPAYGTPTPSRHGRREVRFSEEPPEVYGDFEPRAAKEKARVGRQIPLEGFRPDSAKEEVRESAYYLRSRQRRQPRLHEAEEMQTRRAALLQQQPHSPPPPLRPSPVTTRRGLRDSHSSEEDEPPSQTVLSQTVTKKAIRRTQETPVMSEDPLISLRRPPLRSSRSEAASVQQKVNFLEEGETEENDQDSFDSDVTVKVRSGDSVESGDQTTRSSSQYKESFWQSSQSGDFTAFDEQPLKLSSGYQKTPQEWAEKTVRIRTRMLTSSPGMRSIYGSFSDDDSVQKSELGNQSPSTSNQQMTGQPKSVSSVKTKRYWPFAVIAALLIGGFLYTRPPEAETTAVQEFQNQMKQLMNKYQGQDEKLWKRSQTFLEKHLNGSQSRPQPAILLLTAARDAEEALRCLSEQIADAYSSFRSVPAIRIDGASKATRDSDTVKEEVDQELSNGFRNGQNAAVVHRFESLPAGSTLIFYKYCDHESAAFKDVALVLTVLLEEETLGTSLGLKEIEEKVRDFLQVKFTNSDTPNSYKHMDPDKLSGLWSRISHLVLPVQPENDLKKGICL.

Positions 1–14 (MAGEGQRAEPEREG) are enriched in basic and acidic residues. Disordered regions lie at residues 1–261 (MAGE…YKES) and 310–346 (MRSIYGSFSDDDSVQKSELGNQSPSTSNQQMTGQPKS). Topologically, residues 1 to 354 (MAGEGQRAEP…KSVSSVKTKR (354 aa)) are nuclear. The residue at position 61 (S61) is a Phosphoserine. Basic and acidic residues-rich tracts occupy residues 71–81 (FEPRAAKEKAR), 91–102 (FRPDSAKEEVRE), and 116–125 (RLHEAEEMQT). S137, S145, S156, S158, S159, and S189 each carry phosphoserine. A compositionally biased stretch (low complexity) spans 192 to 203 (PLISLRRPPLRS). A compositionally biased stretch (acidic residues) spans 219–232 (EEGETEENDQDSFD). T223 carries the post-translational modification Phosphothreonine. 3 positions are modified to phosphoserine: S230, S233, and S244. Polar residues predominate over residues 247–261 (SGDQTTRSSSQYKES). At S322 the chain carries Phosphoserine. K325 participates in a covalent cross-link: Glycyl lysine isopeptide (Lys-Gly) (interchain with G-Cter in SUMO2). Over residues 325–346 (KSELGNQSPSTSNQQMTGQPKS) the composition is skewed to polar residues. S332 is modified (phosphoserine). The chain crosses the membrane as a helical span at residues 355-371 (YWPFAVIAALLIGGFLY). Over 372 to 600 (TRPPEAETTA…ENDLKKGICL (229 aa)) the chain is Perinuclear space. An interaction with TOR1A region spans residues 373–600 (RPPEAETTAV…ENDLKKGICL (228 aa)). Residues 376–452 (EAETTAVQEF…SEQIADAYSS (77 aa)) adopt a coiled-coil conformation. An N-linked (GlcNAc...) asparagine glycan is attached at N416.

Belongs to the TOR1AIP family. In terms of assembly, interacts with ATP1B4. Interacts with TOR1A (ATP-bound). Interacts with TOR1B, TOR2A and TOR3A. Interacts with VIM.

It localises to the nucleus inner membrane. Its function is as follows. Required for nuclear membrane integrity. Induces TOR1A and TOR1B ATPase activity and is required for their location on the nuclear membrane. Binds to A- and B-type lamins. Possible role in membrane attachment and assembly of the nuclear lamina. This Bos taurus (Bovine) protein is Torsin-1A-interacting protein 1 (TOR1AIP1).